The chain runs to 129 residues: UPF0344 protein SAB0838 (129 aa).

Helical transmembrane passes span 1–21 (MLHL…ATYL), 36–56 (LHMV…WILI), 67–87 (MLLT…EVSI), and 99–119 (MFWI…ILPL).

It belongs to the UPF0344 family.

The protein localises to the cell membrane. This is UPF0344 protein SAB0838 from Staphylococcus aureus (strain bovine RF122 / ET3-1).